Here is a 349-residue protein sequence, read N- to C-terminus: Tetraacyldisaccharide 4'-kinase (349 aa).

Residue 58–65 participates in ATP binding; it reads TAGGSGKT.

Belongs to the LpxK family.

The enzyme catalyses a lipid A disaccharide + ATP = a lipid IVA + ADP + H(+). The protein operates within glycolipid biosynthesis; lipid IV(A) biosynthesis; lipid IV(A) from (3R)-3-hydroxytetradecanoyl-[acyl-carrier-protein] and UDP-N-acetyl-alpha-D-glucosamine: step 6/6. Functionally, transfers the gamma-phosphate of ATP to the 4'-position of a tetraacyldisaccharide 1-phosphate intermediate (termed DS-1-P) to form tetraacyldisaccharide 1,4'-bis-phosphate (lipid IVA). This chain is Tetraacyldisaccharide 4'-kinase, found in Shewanella amazonensis (strain ATCC BAA-1098 / SB2B).